The sequence spans 739 residues: NAD(P)H-quinone oxidoreductase subunit 5, chloroplastic (739 aa).

Helical transmembrane passes span 9 to 29 (WIIP…LLLV), 39 to 59 (IWAF…ADLA), 89 to 109 (IDPL…MVLI), 125 to 145 (FAYM…SNLI), 147 to 167 (IYIF…FWFT), 185 to 205 (GDFG…SFEF), 224 to 244 (LFAA…SAQF), 258 to 278 (TPIS…FLVA), 280 to 300 (LLPL…IGII), 327 to 347 (LGYI…FHLI), 354 to 374 (ALLF…VGYS), 396 to 416 (TTFF…CFWS), 425 to 445 (WLYS…TAFY), 544 to 564 (LFPM…GIPF), 603 to 623 (IYSV…YGSV), and 716 to 736 (ISSY…IYYF).

The protein belongs to the complex I subunit 5 family. In terms of assembly, NDH is composed of at least 16 different subunits, 5 of which are encoded in the nucleus.

It is found in the plastid. Its subcellular location is the chloroplast thylakoid membrane. It catalyses the reaction a plastoquinone + NADH + (n+1) H(+)(in) = a plastoquinol + NAD(+) + n H(+)(out). The enzyme catalyses a plastoquinone + NADPH + (n+1) H(+)(in) = a plastoquinol + NADP(+) + n H(+)(out). NDH shuttles electrons from NAD(P)H:plastoquinone, via FMN and iron-sulfur (Fe-S) centers, to quinones in the photosynthetic chain and possibly in a chloroplast respiratory chain. The immediate electron acceptor for the enzyme in this species is believed to be plastoquinone. Couples the redox reaction to proton translocation, and thus conserves the redox energy in a proton gradient. The chain is NAD(P)H-quinone oxidoreductase subunit 5, chloroplastic (ndhF) from Acorus calamus (Sweet flag).